The chain runs to 93 residues: Small ribosomal subunit protein uS19 (93 aa).

The protein belongs to the universal ribosomal protein uS19 family.

Protein S19 forms a complex with S13 that binds strongly to the 16S ribosomal RNA. In Campylobacter hominis (strain ATCC BAA-381 / DSM 21671 / CCUG 45161 / LMG 19568 / NCTC 13146 / CH001A), this protein is Small ribosomal subunit protein uS19.